A 640-amino-acid chain; its full sequence is Replication protein A 70 kDa DNA-binding subunit A (640 aa).

A DNA-binding region (OB) is located at residues 211 to 293; that stretch reads AIKARVTAKG…NHLKNEWEIF (83 aa). The C4-type zinc finger occupies 503-529; sequence CPLMIGDKQCNKKVTRSGTNRWLCDRC.

Belongs to the replication factor A protein 1 family. As to quaternary structure, heterotrimer of RPA1, RPA2 and RPA3 (canonical replication protein A complex). Interacts with RPA2A. In terms of tissue distribution, expressed in roots, leaves, stalks and flower buds.

The protein localises to the nucleus. Functionally, component of the replication protein A complex (RPA) required for DNA recombination, repair and replication. The activity of RPA is mediated by single-stranded DNA binding and protein interactions. Plays an essential role at later stages of meiotic recombination events required for the formation of class I crossovers. Is essential for normal progression through meiosis in pollen mother cells. Is involved in repair of double-strand DNA breaks (DSBs) induced by genotoxic stresses, but does not seem to be required for the repair of meiotic DSBs. The sequence is that of Replication protein A 70 kDa DNA-binding subunit A (RPA1A) from Arabidopsis thaliana (Mouse-ear cress).